The primary structure comprises 115 residues: MVKSTSKDAQDLFHSLHSAYTATPTNLKIIDLYVCFAVFTALIQVAYMALVGSFPFNSFLSGVLSCIGTAVLAVCLRIQVNKENKEFKDLAPERAFADFVLCNLVLHLVIINFLG.

The Cytoplasmic segment spans residues 1 to 31 (MVKSTSKDAQDLFHSLHSAYTATPTNLKIID). The chain crosses the membrane as a helical span at residues 32–52 (LYVCFAVFTALIQVAYMALVG). The Lumenal portion of the chain corresponds to 53-55 (SFP). Residues 56–76 (FNSFLSGVLSCIGTAVLAVCL) form a helical membrane-spanning segment. Topologically, residues 77-94 (RIQVNKENKEFKDLAPER) are cytoplasmic. A helical transmembrane segment spans residues 95–115 (AFADFVLCNLVLHLVIINFLG).

The protein belongs to the DAD/OST2 family. In terms of assembly, component of the oligosaccharyltransferase (OST) complex.

It localises to the endoplasmic reticulum membrane. Its pathway is protein modification; protein glycosylation. Subunit of the oligosaccharyl transferase (OST) complex that catalyzes the initial transfer of a defined glycan (Glc(3)Man(9)GlcNAc(2) in eukaryotes) from the lipid carrier dolichol-pyrophosphate to an asparagine residue within an Asn-X-Ser/Thr consensus motif in nascent polypeptide chains, the first step in protein N-glycosylation. N-glycosylation occurs cotranslationally and the complex associates with the Sec61 complex at the channel-forming translocon complex that mediates protein translocation across the endoplasmic reticulum (ER). All subunits are required for a maximal enzyme activity. The sequence is that of Dolichyl-diphosphooligosaccharide--protein glycosyltransferase subunit DAD2 (DAD2) from Arabidopsis thaliana (Mouse-ear cress).